A 180-amino-acid chain; its full sequence is Shikimate kinase (180 aa).

An ATP-binding site is contributed by 14-19 (GAGKSC). Residue serine 18 participates in Mg(2+) binding. Positions 36, 60, and 82 each coordinate substrate. Arginine 120 contributes to the ATP binding site. Substrate is bound at residue arginine 139.

This sequence belongs to the shikimate kinase family. In terms of assembly, monomer. Mg(2+) is required as a cofactor.

It localises to the cytoplasm. It carries out the reaction shikimate + ATP = 3-phosphoshikimate + ADP + H(+). It functions in the pathway metabolic intermediate biosynthesis; chorismate biosynthesis; chorismate from D-erythrose 4-phosphate and phosphoenolpyruvate: step 5/7. Functionally, catalyzes the specific phosphorylation of the 3-hydroxyl group of shikimic acid using ATP as a cosubstrate. The protein is Shikimate kinase of Xanthomonas oryzae pv. oryzae (strain PXO99A).